The chain runs to 424 residues: Tubulin-specific chaperone cofactor E-like protein (424 aa).

A phosphoserine mark is found at Ser-18 and Ser-41. 7 LRR repeats span residues 73–98, 99–123, 124–147, 150–172, 173–197, 199–224, and 226–250; these read CAHV…IVSN, VPQL…TCAG, SFSG…HTIL, LPDL…PSVC, CHSL…KLGV, FPSL…SLAR, and FPNL…KLNS. Residues 262–303 form the LRRCT domain; it reads IPLLQPYTTEERRKLVVARLPSVSKLNGSVVTDGEREDSERF. Positions 334–424 constitute a Ubiquitin-like domain; the sequence is AEVDLRPQSS…DKIFVESKTK (91 aa). Positions 350-375 form a coiled coil; the sequence is FNDQVEEVSIRLDQTVAELKRQLKTL.

It is found in the cytoplasm. The protein resides in the cytoskeleton. Functionally, acts as a regulator of tubulin stability. The sequence is that of Tubulin-specific chaperone cofactor E-like protein (Tbcel) from Rattus norvegicus (Rat).